Here is a 147-residue protein sequence, read N- to C-terminus: Siroheme decarboxylase NirG subunit (147 aa).

The protein belongs to the Ahb/Nir family. In terms of assembly, probably forms a complex composed of NirD, NirL, NirG and NirH. All proteins are required for the total conversion of siroheme to didecarboxysiroheme.

The enzyme catalyses siroheme + 2 H(+) = 12,18-didecarboxysiroheme + 2 CO2. The protein operates within porphyrin-containing compound metabolism. Involved in heme d1 biosynthesis. Catalyzes the decarboxylation of siroheme into didecarboxysiroheme. This is Siroheme decarboxylase NirG subunit from Pseudomonas aeruginosa (strain ATCC 15692 / DSM 22644 / CIP 104116 / JCM 14847 / LMG 12228 / 1C / PRS 101 / PAO1).